The sequence spans 221 residues: Lectin L6 (221 aa).

Repeat copies occupy residues 1-38 (VQWH…PCYD), 39-75 (GQWT…VDGS), 76-113 (GSWV…KPCN), 114-150 (GAWT…VDGS), 151-188 (GSWQ…KPCS), and 189-221 (GQWS…YRSG). The segment at 1-221 (VQWHQIPGKL…NSVDNIYRSG (221 aa)) is 6 X approximate tandem repeats. An intrachain disulfide couples cysteine 32 to cysteine 36. Cysteine 108 and cysteine 112 are disulfide-bonded. A disulfide bridge links cysteine 183 with cysteine 187.

The protein belongs to the tectonin family. As to expression, hemocytes.

Its subcellular location is the cytoplasmic vesicle. It is found in the secretory vesicle. Its function is as follows. Lipopolysaccharide-binding protein with Gram-negative antibacterial activity. Binds zinc and calcium. The sequence is that of Lectin L6 from Tachypleus tridentatus (Japanese horseshoe crab).